A 299-amino-acid polypeptide reads, in one-letter code: Tyrosine recombinase XerC (299 aa).

The region spanning 2-88 (SALQPLIDTY…ALRSFLDYLV (87 aa)) is the Core-binding (CB) domain. The 181-residue stretch at 109–289 (PLPKNVSVDD…DFQHLSKIYD (181 aa)) folds into the Tyr recombinase domain. Catalysis depends on residues Arg148, Lys172, His241, Arg244, and His267. Tyr276 serves as the catalytic O-(3'-phospho-DNA)-tyrosine intermediate.

It belongs to the 'phage' integrase family. XerC subfamily. As to quaternary structure, forms a cyclic heterotetrameric complex composed of two molecules of XerC and two molecules of XerD.

It is found in the cytoplasm. In terms of biological role, site-specific tyrosine recombinase, which acts by catalyzing the cutting and rejoining of the recombining DNA molecules. The XerC-XerD complex is essential to convert dimers of the bacterial chromosome into monomers to permit their segregation at cell division. It also contributes to the segregational stability of plasmids. This Psychromonas ingrahamii (strain DSM 17664 / CCUG 51855 / 37) protein is Tyrosine recombinase XerC.